We begin with the raw amino-acid sequence, 311 residues long: Lipoyl synthase (311 aa).

Residues Cys-47, Cys-52, Cys-58, Cys-73, Cys-77, Cys-80, and Ser-286 each coordinate [4Fe-4S] cluster. Residues Trp-59–Phe-276 enclose the Radical SAM core domain.

Belongs to the radical SAM superfamily. Lipoyl synthase family. [4Fe-4S] cluster is required as a cofactor.

It localises to the cytoplasm. The catalysed reaction is [[Fe-S] cluster scaffold protein carrying a second [4Fe-4S](2+) cluster] + N(6)-octanoyl-L-lysyl-[protein] + 2 oxidized [2Fe-2S]-[ferredoxin] + 2 S-adenosyl-L-methionine + 4 H(+) = [[Fe-S] cluster scaffold protein] + N(6)-[(R)-dihydrolipoyl]-L-lysyl-[protein] + 4 Fe(3+) + 2 hydrogen sulfide + 2 5'-deoxyadenosine + 2 L-methionine + 2 reduced [2Fe-2S]-[ferredoxin]. The protein operates within protein modification; protein lipoylation via endogenous pathway; protein N(6)-(lipoyl)lysine from octanoyl-[acyl-carrier-protein]: step 2/2. Catalyzes the radical-mediated insertion of two sulfur atoms into the C-6 and C-8 positions of the octanoyl moiety bound to the lipoyl domains of lipoate-dependent enzymes, thereby converting the octanoylated domains into lipoylated derivatives. In Chlamydia trachomatis serovar A (strain ATCC VR-571B / DSM 19440 / HAR-13), this protein is Lipoyl synthase.